A 251-amino-acid chain; its full sequence is CDP-diacylglycerol pyrophosphatase (251 aa).

The helical transmembrane segment at 4-24 threads the bilayer; sequence AGLLFLVMIVIAVVAAGIGYW.

The protein belongs to the Cdh family.

It localises to the cell inner membrane. It catalyses the reaction a CDP-1,2-diacyl-sn-glycerol + H2O = a 1,2-diacyl-sn-glycero-3-phosphate + CMP + 2 H(+). It functions in the pathway phospholipid metabolism; CDP-diacylglycerol degradation; phosphatidate from CDP-diacylglycerol: step 1/1. The polypeptide is CDP-diacylglycerol pyrophosphatase (Escherichia coli (strain K12 / MC4100 / BW2952)).